The following is a 121-amino-acid chain: Small ribosomal subunit protein uS12c (121 aa).

Belongs to the universal ribosomal protein uS12 family. As to quaternary structure, part of the 30S ribosomal subunit.

The protein resides in the plastid. It localises to the apicoplast. With S4 and S5 plays an important role in translational accuracy. Located at the interface of the 30S and 50S subunits. In Toxoplasma gondii, this protein is Small ribosomal subunit protein uS12c (rps12).